A 544-amino-acid polypeptide reads, in one-letter code: Flagellar hook-associated protein 1 (544 aa).

The protein belongs to the flagella basal body rod proteins family.

It localises to the secreted. It is found in the bacterial flagellum. The protein is Flagellar hook-associated protein 1 (flgK) of Buchnera aphidicola subsp. Schizaphis graminum (strain Sg).